Consider the following 175-residue polypeptide: Adenine phosphoribosyltransferase (175 aa).

Belongs to the purine/pyrimidine phosphoribosyltransferase family. In terms of assembly, homodimer.

The protein localises to the cytoplasm. The enzyme catalyses AMP + diphosphate = 5-phospho-alpha-D-ribose 1-diphosphate + adenine. It participates in purine metabolism; AMP biosynthesis via salvage pathway; AMP from adenine: step 1/1. Functionally, catalyzes a salvage reaction resulting in the formation of AMP, that is energically less costly than de novo synthesis. In Synechococcus sp. (strain CC9902), this protein is Adenine phosphoribosyltransferase.